A 161-amino-acid polypeptide reads, in one-letter code: Spermidine N(1)-acetyltransferase (161 aa).

The N-acetyltransferase domain maps to Ile3 to Glu160. Acetyl-CoA is bound by residues Leu92–Leu94, Thr99–Gly104, Asn131, and Ser136. The active-site Proton donor is the Tyr138. Lys140 is an acetyl-CoA binding site.

Belongs to the acetyltransferase family. In terms of assembly, monomer or homodimer.

It catalyses the reaction an alkane-alpha,omega-diamine + acetyl-CoA = an N-acetylalkane-alpha,omega-diamine + CoA + H(+). Functionally, involved in the protection against polyamine toxicity by regulating their concentration. Could also be involved in the negative control of sporulation as well as production of degradative enzymes such as alpha-amylase, levansucrase and alkaline phosphatase. Catalyzes the transfer of an acetyl group from acetyl coenzyme A (AcCoA) to an acceptor substrate and release both CoA and the acetylated product. It can use a variety of substrates including spermidine, L-tryptophan, L-leucine, L-lysine, dopamine and tyramine. The polypeptide is Spermidine N(1)-acetyltransferase (Thermoplasma acidophilum (strain ATCC 25905 / DSM 1728 / JCM 9062 / NBRC 15155 / AMRC-C165)).